A 235-amino-acid chain; its full sequence is Phosphate-specific transport system accessory protein PhoU homolog 2 (235 aa).

This sequence belongs to the PhoU family. Homodimer.

The protein localises to the cytoplasm. In terms of biological role, plays a role in the regulation of phosphate uptake. The protein is Phosphate-specific transport system accessory protein PhoU homolog 2 (phoU2) of Thermotoga maritima (strain ATCC 43589 / DSM 3109 / JCM 10099 / NBRC 100826 / MSB8).